The sequence spans 333 residues: Anthranilate phosphoribosyltransferase (333 aa).

Residues Gly-81, 84 to 85 (GD), Thr-89, 91 to 94 (NIST), 109 to 117 (KHGNRSVSS), and Ala-121 contribute to the 5-phospho-alpha-D-ribose 1-diphosphate site. Gly-81 provides a ligand contact to anthranilate. Ser-93 contacts Mg(2+). Asn-112 provides a ligand contact to anthranilate. Arg-167 contacts anthranilate. Mg(2+) contacts are provided by Asp-225 and Glu-226.

Belongs to the anthranilate phosphoribosyltransferase family. Homodimer. Mg(2+) serves as cofactor.

It carries out the reaction N-(5-phospho-beta-D-ribosyl)anthranilate + diphosphate = 5-phospho-alpha-D-ribose 1-diphosphate + anthranilate. It participates in amino-acid biosynthesis; L-tryptophan biosynthesis; L-tryptophan from chorismate: step 2/5. Catalyzes the transfer of the phosphoribosyl group of 5-phosphorylribose-1-pyrophosphate (PRPP) to anthranilate to yield N-(5'-phosphoribosyl)-anthranilate (PRA). The sequence is that of Anthranilate phosphoribosyltransferase from Haemophilus influenzae (strain 86-028NP).